The primary structure comprises 550 residues: MTGDKGPQRLSGSSYGSISSPTSPTSPGPQQAPPRETYLSEKIPIPDTKPGTFSLRKLWAFTGPGFLMSIAFLDPGNIESDLQAGAVAGFKLLWVLLWATVLGLLCQRLAARLGVVTGKDLGEVCHLYYPKVPRTVLWLTIELAIVGSDMQEVIGTAIAFNLLSAGRIPLWGGVLITIVDTFFFLFLDNYGLRKLEAFFGLLITIMALTFGYEYVVARPEQGALLRGLFLPSCPGCGHPELLQAVGIVGAIIMPHNIYLHSALVKSREIDRARRADIREANMYFLIEATIALSVSFIINLFVMAVFGQAFYQKTNQAAFNICANSSLHDYAKIFPMNNATVAVDIYQGGVILGCLFGPAALYIWAIGLLAAGQSSTMTGTYAGQFVMEGFLRLRWSRFARVLLTRSCAILPTVLVAVFRDLRDLSGLNDLLNVLQSLLLPFAVLPILTFTSMPTLMQEFANGLLNKVVTSSIMVLVCAINLYFVVSYLPSLPHPAYFGLAALLAAAYLGLSTYLVWTCCLAHGATFLAHSSHHHFLYGLLEEDQKGETSG.

Residues 1–45 (MTGDKGPQRLSGSSYGSISSPTSPTSPGPQQAPPRETYLSEKIPI) are disordered. Residues 1 to 58 (MTGDKGPQRLSGSSYGSISSPTSPTSPGPQQAPPRETYLSEKIPIPDTKPGTFSLRKL) are Cytoplasmic-facing. The segment covering 11–23 (SGSSYGSISSPTS) has biased composition (low complexity). The helical transmembrane segment at 59–76 (WAFTGPGFLMSIAFLDPG) threads the bilayer. At 77–85 (NIESDLQAG) the chain is on the extracellular side. The chain crosses the membrane as a helical span at residues 86–105 (AVAGFKLLWVLLWATVLGLL). Topologically, residues 106–142 (CQRLAARLGVVTGKDLGEVCHLYYPKVPRTVLWLTIE) are cytoplasmic. A helical transmembrane segment spans residues 143–163 (LAIVGSDMQEVIGTAIAFNLL). At 164 to 167 (SAGR) the chain is on the extracellular side. A helical membrane pass occupies residues 168–187 (IPLWGGVLITIVDTFFFLFL). At 188 to 196 (DNYGLRKLE) the chain is on the cytoplasmic side. A helical transmembrane segment spans residues 197–217 (AFFGLLITIMALTFGYEYVVA). At 218 to 240 (RPEQGALLRGLFLPSCPGCGHPE) the chain is on the extracellular side. Residues 241 to 259 (LLQAVGIVGAIIMPHNIYL) traverse the membrane as a helical segment. The Cytoplasmic segment spans residues 260–287 (HSALVKSREIDRARRADIREANMYFLIE). The chain crosses the membrane as a helical span at residues 288-307 (ATIALSVSFIINLFVMAVFG). Topologically, residues 308–349 (QAFYQKTNQAAFNICANSSLHDYAKIFPMNNATVAVDIYQGG) are extracellular. Asparagine 324 and asparagine 338 each carry an N-linked (GlcNAc...) asparagine glycan. A helical membrane pass occupies residues 350 to 369 (VILGCLFGPAALYIWAIGLL). The Cytoplasmic portion of the chain corresponds to 370–400 (AAGQSSTMTGTYAGQFVMEGFLRLRWSRFAR). A helical transmembrane segment spans residues 401–418 (VLLTRSCAILPTVLVAVF). Topologically, residues 419 to 429 (RDLRDLSGLND) are extracellular. The helical transmembrane segment at 430 to 450 (LLNVLQSLLLPFAVLPILTFT) threads the bilayer. Topologically, residues 451 to 466 (SMPTLMQEFANGLLNK) are cytoplasmic. The chain crosses the membrane as a helical span at residues 467 to 488 (VVTSSIMVLVCAINLYFVVSYL). The Extracellular segment spans residues 489 to 496 (PSLPHPAY). Residues 497-516 (FGLAALLAAAYLGLSTYLVW) traverse the membrane as a helical segment. Residues 517–550 (TCCLAHGATFLAHSSHHHFLYGLLEEDQKGETSG) are Cytoplasmic-facing.

The protein belongs to the NRAMP family. Macrophages; peripheral blood leukocytes, lung, spleen and liver.

The protein localises to the late endosome membrane. Its subcellular location is the lysosome membrane. It catalyses the reaction Zn(2+)(in) + H(+)(out) = Zn(2+)(out) + H(+)(in). It carries out the reaction Fe(2+)(in) + H(+)(out) = Fe(2+)(out) + H(+)(in). The catalysed reaction is Mn(2+)(in) + H(+)(out) = Mn(2+)(out) + H(+)(in). In terms of biological role, macrophage-specific antiporter that fluxes metal ions in either direction against a proton gradient. Localized to late endosomal lysosomal membranes, delivers bivalent cations from the cytosol into these acidic compartments where they may directly affect antimicrobial activity. Involved in iron metabolism and host natural resistance to infection with intracellular parasites. Pathogen resistance involves sequestration of Fe(2+) and Mn(2+), cofactors of both prokaryotic and eukaryotic catalases and superoxide dismutases, not only to protect the macrophage against its own generation of reactive oxygen species, but to deny the cations to the pathogen for synthesis of its protective enzymes. The chain is Natural resistance-associated macrophage protein 1 from Homo sapiens (Human).